Here is a 363-residue protein sequence, read N- to C-terminus: Spermatogenesis-associated protein 22 (363 aa).

4 stretches are compositionally biased toward polar residues: residues 1–12 (MKRSLNENSARS), 30–48 (QPLT…TPSD), 98–108 (IQSNTGRSQGG), and 140–157 (NDGK…QQKQ). 3 disordered regions span residues 1–51 (MKRS…DNYD), 98–127 (IQSN…NKND), and 140–170 (NDGK…SRNK).

In terms of assembly, component of a multiprotein complex with MEIOB and RPA2. Interacts with MEIOB. Interacts with the complex BRME1:HSF2BP:BRCA2. Highly expressed in adult testis.

Its subcellular location is the chromosome. In terms of biological role, meiosis-specific protein required for homologous recombination in meiosis I. This Homo sapiens (Human) protein is Spermatogenesis-associated protein 22.